The following is a 307-amino-acid chain: MMWRRWLALALVAVAWVHAEEQVRSKSKICANVFCGAGRECAVTEKGEPTCLCIEQCKPHKRPVCGSNGKTYLNHCELHRDACLTGSKIQVDYDGHCKEKKSVSPSASPVVCYQSNRDELRRRIIQWLEAEIIPDGWFSKGSNYSEILDKYFKNFDNGDSRLDSSEFLKFVEQNETAINITTYADQENNKLLRGLCVDALIELSDENADWKLSFQEFLKCLNPSFNPPEKKCALEDETYADGAETEVDCNRCVCACGNWVCTAMTCDGKNQKGAQTQAEEEMTRYVQELQKHQETAEKSKRVSTKEI.

The N-terminal stretch at 1 to 19 (MMWRRWLALALVAVAWVHA) is a signal peptide. Positions 29–52 (ICANVFCGAGRECAVTEKGEPTCL) constitute a Follistatin-like domain. Cystine bridges form between C30–C41, C35–C51, C53–C83, C57–C76, and C65–C97. In terms of domain architecture, Kazal-like spans 47 to 99 (GEPTCLCIEQCKPHKRPVCGSNGKTYLNHCELHRDACLTGSKIQVDYDGHCKE). N-linked (GlcNAc...) asparagine glycosylation is present at N143. The region spanning 143 to 177 (NYSEILDKYFKNFDNGDSRLDSSEFLKFVEQNETA) is the EF-hand 1 domain. S164 is modified (phosphoserine). N-linked (GlcNAc...) asparagine glycans are attached at residues N174 and N179. The region spanning 192–227 (LRGLCVDALIELSDENADWKLSFQEFLKCLNPSFNP) is the EF-hand 2 domain. In terms of domain architecture, VWFC spans 232-286 (CALEDETYADGAETEVDCNRCVCACGNWVCTAMTCDGKNQKGAQTQAEEEMTRYV).

As to quaternary structure, homodimer. Interacts with SCN10A. Interacts with DIP2A; DIP2A may act as a cell surface receptor for FSTL1. Interacts with BMP4. Interacts with CD14; this interaction promotes TL4-mediated signaling cascade.

The protein localises to the secreted. Secreted glycoprotein that is involved in various physiological processes, such as angiogenesis, regulation of the immune response, cell proliferation and differentiation. Plays a role in the development of the central nervous system, skeletal system, lungs, and ureter. Promotes endothelial cell survival, migration and differentiation into network structures in an AKT-dependent manner. Also promotes survival of cardiac myocytes. Initiates various signaling cascades by activating different receptors on the cell surface such as DIP2A, TLR4 or BMP receptors. This Bos taurus (Bovine) protein is Follistatin-related protein 1 (FSTL1).